The primary structure comprises 204 residues: Large ribosomal subunit protein uL18 (204 aa).

Belongs to the universal ribosomal protein uL18 family. As to quaternary structure, part of the 50S ribosomal subunit. Contacts the 5S and 23S rRNAs.

Its function is as follows. This is one of the proteins that bind and probably mediate the attachment of the 5S RNA into the large ribosomal subunit, where it forms part of the central protuberance. The chain is Large ribosomal subunit protein uL18 from Ignicoccus hospitalis (strain KIN4/I / DSM 18386 / JCM 14125).